The primary structure comprises 329 residues: NADH-quinone oxidoreductase subunit H (329 aa).

The next 9 membrane-spanning stretches (helical) occupy residues 9–29, 42–62, 75–95, 117–137, 154–174, 188–208, 238–258, 269–291, and 309–329; these read LIKI…ATYI, GPSY…IKLF, LIFT…MAPI, IGFL…ILAG, IQLL…LMVV, GGFL…FLIA, LKWG…SFVI, WGFI…LSMW, and WKIM…IILI.

Belongs to the complex I subunit 1 family. As to quaternary structure, NDH-1 is composed of 14 different subunits. Subunits NuoA, H, J, K, L, M, N constitute the membrane sector of the complex.

The protein resides in the cell inner membrane. It carries out the reaction a quinone + NADH + 5 H(+)(in) = a quinol + NAD(+) + 4 H(+)(out). NDH-1 shuttles electrons from NADH, via FMN and iron-sulfur (Fe-S) centers, to quinones in the respiratory chain. The immediate electron acceptor for the enzyme in this species is believed to be ubiquinone. Couples the redox reaction to proton translocation (for every two electrons transferred, four hydrogen ions are translocated across the cytoplasmic membrane), and thus conserves the redox energy in a proton gradient. This subunit may bind ubiquinone. The polypeptide is NADH-quinone oxidoreductase subunit H (Helicobacter acinonychis (strain Sheeba)).